The sequence spans 124 residues: Ribonuclease pancreatic (124 aa).

Over residues 1–13 the composition is skewed to basic and acidic residues; that stretch reads KETSAQKFERQHM. The segment at 1–25 is disordered; sequence KETSAQKFERQHMDSTGSSSSSPTY. 2 residues coordinate substrate: Lys-7 and Arg-10. His-12 serves as the catalytic Proton acceptor. Cystine bridges form between Cys-26–Cys-84, Cys-40–Cys-95, Cys-58–Cys-110, and Cys-65–Cys-72. Residues 41-45, Lys-66, and Arg-85 each bind substrate; that span reads KPVNT. His-119 serves as the catalytic Proton donor.

This sequence belongs to the pancreatic ribonuclease family. In terms of assembly, monomer. Interacts with and forms tight 1:1 complexes with RNH1. Dimerization of two such complexes may occur. Interaction with RNH1 inhibits this protein. In terms of tissue distribution, pancreas.

Its subcellular location is the secreted. It carries out the reaction an [RNA] containing cytidine + H2O = an [RNA]-3'-cytidine-3'-phosphate + a 5'-hydroxy-ribonucleotide-3'-[RNA].. The enzyme catalyses an [RNA] containing uridine + H2O = an [RNA]-3'-uridine-3'-phosphate + a 5'-hydroxy-ribonucleotide-3'-[RNA].. In terms of biological role, endonuclease that catalyzes the cleavage of RNA on the 3' side of pyrimidine nucleotides. Acts on single-stranded and double-stranded RNA. This is Ribonuclease pancreatic (RNASE1) from Ondatra zibethicus (Muskrat).